The sequence spans 208 residues: Hypoxanthine-guanine phosphoribosyltransferase (208 aa).

Residues Lys63, 122 to 130 (EDIVDSAIT), Lys154, and Asp182 contribute to the GMP site. The Proton acceptor role is filled by Asp126. Mg(2+) is bound at residue Asp182.

Belongs to the purine/pyrimidine phosphoribosyltransferase family. Mg(2+) is required as a cofactor.

Its subcellular location is the cytoplasm. It carries out the reaction IMP + diphosphate = hypoxanthine + 5-phospho-alpha-D-ribose 1-diphosphate. The catalysed reaction is GMP + diphosphate = guanine + 5-phospho-alpha-D-ribose 1-diphosphate. It participates in purine metabolism; IMP biosynthesis via salvage pathway; IMP from hypoxanthine: step 1/1. In terms of biological role, converts guanine to guanosine monophosphate, and hypoxanthine to inosine monophosphate. Transfers the 5-phosphoribosyl group from 5-phosphoribosylpyrophosphate onto the purine. Plays a central role in the generation of purine nucleotides through the purine salvage pathway. The chain is Hypoxanthine-guanine phosphoribosyltransferase (HGPRT) from Crithidia fasciculata.